The primary structure comprises 327 residues: Biotin synthase (327 aa).

The Radical SAM core domain maps to 49–282; that stretch reads FNKDKIDLCS…NKVIRLCGGR (234 aa). [4Fe-4S] cluster is bound by residues C67, C71, and C74. Positions 110, 142, 201, and 277 each coordinate [2Fe-2S] cluster.

The protein belongs to the radical SAM superfamily. Biotin synthase family. In terms of assembly, homodimer. Requires [4Fe-4S] cluster as cofactor. [2Fe-2S] cluster is required as a cofactor.

The enzyme catalyses (4R,5S)-dethiobiotin + (sulfur carrier)-SH + 2 reduced [2Fe-2S]-[ferredoxin] + 2 S-adenosyl-L-methionine = (sulfur carrier)-H + biotin + 2 5'-deoxyadenosine + 2 L-methionine + 2 oxidized [2Fe-2S]-[ferredoxin]. It participates in cofactor biosynthesis; biotin biosynthesis; biotin from 7,8-diaminononanoate: step 2/2. Catalyzes the conversion of dethiobiotin (DTB) to biotin by the insertion of a sulfur atom into dethiobiotin via a radical-based mechanism. This chain is Biotin synthase, found in Methanococcus maripaludis (strain C5 / ATCC BAA-1333).